A 379-amino-acid polypeptide reads, in one-letter code: Subtilisin Carlsberg (379 aa).

The signal sequence occupies residues 1-29 (MMRKKSFWLGMLTAFMLVFTMAFSDSASA). A propeptide spanning residues 30–105 (AQPAKNVEKD…VEEDHVAHAL (76 aa)) is cleaved from the precursor. Residues 44-102 (FKSGVKTASVKKDIIKESGGKVDKQFRIINAAKAKLDKEALKEVKNDPDVAYVEEDHVA) enclose the Inhibitor I9 domain. Q107 serves as a coordination point for Ca(2+). One can recognise a Peptidase S8 domain in the interval 110–378 (PYGIPLIKAD…KGLINVEAAA (269 aa)). The active-site Charge relay system is the D137. Residue D146 participates in Ca(2+) binding. H168 acts as the Charge relay system in catalysis. The Ca(2+) site is built by L179, N181, T183, V185, A273, Y275, and V278. The Charge relay system role is filled by S325.

The protein belongs to the peptidase S8 family. Ca(2+) is required as a cofactor.

It is found in the secreted. The catalysed reaction is Hydrolysis of proteins with broad specificity for peptide bonds, and a preference for a large uncharged residue in P1. Hydrolyzes peptide amides.. With respect to regulation, inhibited by p-chlorophenyl and 1-naphthyl boronic acid derivatives. In terms of biological role, subtilisin is an extracellular alkaline serine protease, it catalyzes the hydrolysis of proteins and peptide amides. Shows high specificity for aromatic and hydrophobic amino acids in the P1 substrate position. May play an important role in the degradation of feather keratin. This Bacillus licheniformis protein is Subtilisin Carlsberg.